The sequence spans 627 residues: UvrABC system protein C (627 aa).

The GIY-YIG domain occupies 26 to 105; that stretch reads PEPGVYFMRD…IKQHQPYFNV (80 aa). The region spanning 215 to 250 is the UVR domain; sequence QELIDILSEQMEKAAEALNFEVAARIRDQIAGLKSL.

The protein belongs to the UvrC family. As to quaternary structure, interacts with UvrB in an incision complex.

The protein resides in the cytoplasm. In terms of biological role, the UvrABC repair system catalyzes the recognition and processing of DNA lesions. UvrC both incises the 5' and 3' sides of the lesion. The N-terminal half is responsible for the 3' incision and the C-terminal half is responsible for the 5' incision. This is UvrABC system protein C from Trichormus variabilis (strain ATCC 29413 / PCC 7937) (Anabaena variabilis).